Here is a 213-residue protein sequence, read N- to C-terminus: Phosphatidylethanolamine N-methyltransferase A (213 aa).

Residues 1 to 21 lie on the Lumenal side of the membrane; it reads MIVEHAIDYIDYLMNYVDFTE. The segment at residues 22–42 is an intramembrane region (helical); sequence KYFLLTIACVVFNPTWWNITA. Residues 43–54 are Lumenal-facing; that stretch reads RMEYKTKFMTKI. Residues 55 to 75 traverse the membrane as a helical segment; it reads CGSKENGCYLLAFLIFSLGIL. Residues 76–102 are Cytoplasmic-facing; that stretch reads RDWLFSEALIRQPIFQEFDRFEVEVLS. A helical transmembrane segment spans residues 103–123; the sequence is YILYGFGGILVLAAYLKLGIT. 107–109 serves as a coordination point for S-adenosyl-L-methionine; sequence GFG. Topologically, residues 124-166 are lumenal; that stretch reads GTYLGDYFGILMKERVTGFPFNVMNNPMYNGSVMLFIAHALSY. The chain crosses the membrane as a helical span at residues 167–187; that stretch reads KSVAGLVLSFVVYVVYKFALI. At 188–213 the chain is on the cytoplasmic side; sequence FEESFTNYIYSTAAANAAKKNKSKSK. 189 to 190 is an S-adenosyl-L-methionine binding site; sequence EE.

The protein belongs to the class VI-like SAM-binding methyltransferase superfamily. PEMT/PEM2 methyltransferase family.

Its subcellular location is the endoplasmic reticulum membrane. The protein localises to the mitochondrion membrane. It carries out the reaction a 1,2-diacyl-sn-glycero-3-phospho-N-methylethanolamine + S-adenosyl-L-methionine = a 1,2-diacyl-sn-glycero-3-phospho-N,N-dimethylethanolamine + S-adenosyl-L-homocysteine + H(+). The enzyme catalyses a 1,2-diacyl-sn-glycero-3-phospho-N,N-dimethylethanolamine + S-adenosyl-L-methionine = a 1,2-diacyl-sn-glycero-3-phosphocholine + S-adenosyl-L-homocysteine + H(+). The catalysed reaction is a 1,2-diacyl-sn-glycero-3-phosphoethanolamine + S-adenosyl-L-methionine = a 1,2-diacyl-sn-glycero-3-phospho-N-methylethanolamine + S-adenosyl-L-homocysteine + H(+). Its pathway is phospholipid metabolism; phosphatidylcholine biosynthesis. Catalyzes the three sequential steps of the methylation pathway of phosphatidylcholine biosynthesis, the SAM-dependent methylation of phosphatidylethanolamine (PE) to phosphatidylmonomethylethanolamine (PMME), PMME to phosphatidyldimethylethanolamine (PDME), and PDME to phosphatidylcholine (PC). In Dictyostelium discoideum (Social amoeba), this protein is Phosphatidylethanolamine N-methyltransferase A (pemtA).